Reading from the N-terminus, the 401-residue chain is Voltage-gated potassium channel subunit beta-1 (401 aa).

4 residues coordinate NADP(+): Thr-90, Trp-91, Gln-97, and Asp-119. Tyr-124 functions as the Proton donor/acceptor in the catalytic mechanism. Residues Asn-192, Ser-222, Arg-223, Gln-248, Trp-277, Ser-278, Pro-279, Leu-280, Ala-281, Cys-282, Lys-288, Arg-298, Gly-357, Ser-359, Gln-363, Glu-366, and Asn-367 each coordinate NADP(+).

Belongs to the shaker potassium channel beta subunit family. In terms of assembly, homotetramer. Interaction with tetrameric potassium channel alpha subunits gives rise to a heterooctamer.

The protein localises to the cytoplasm. It localises to the membrane. The protein resides in the cell membrane. It catalyses the reaction a primary alcohol + NADP(+) = an aldehyde + NADPH + H(+). It carries out the reaction a secondary alcohol + NADP(+) = a ketone + NADPH + H(+). Its function is as follows. Regulatory subunit of the voltage-gated potassium (Kv) channels composed of pore-forming and potassium-conducting alpha subunits and of regulatory beta subunits. The beta-1/KCNAB1 cytoplasmic subunit mediates closure of delayed rectifier potassium channels by physically obstructing the pore via its N-terminal domain and increases the speed of channel closure for other family members. Promotes the inactivation of KCNA1, KCNA2, KCNA4, KCNA5 and KCNA6 alpha subunit-containing channels. Displays nicotinamide adenine dinucleotide phosphate (NADPH)-dependent aldoketoreductase activity by catalyzing the NADPH-dependent reduction of a variety of endogenous aldehydes and ketones. The binding of NADPH is required for efficient down-regulation of potassium channel activity. Oxidation of the bound NADPH restrains N-terminal domain from blocking the channel, thereby decreasing N-type inactivation of potassium channel activity. The polypeptide is Voltage-gated potassium channel subunit beta-1 (KCNAB1) (Gallus gallus (Chicken)).